A 226-amino-acid polypeptide reads, in one-letter code: MRVLVAIDGPAGAGKSTIAKLVAKKFNLMYIDTGAMYRAITYLAQNKNITPSNVEGLCNLINSISMYFKDDKIIVNGEDLSEEIRKPNVSSNVSLYASVLEVRTLLVDIQKDLACKYEVVMDGRDIGTVVMPHAPFKFFLTATPEIRADRRYKELKEKSQKVEYKNILEEIIKRDYIDSNRKVSPLKKAKDAIEIDTTNYHIEEVVDKISKLIESTIIKEKGRITK.

9-17 (GPAGAGKST) contacts ATP.

It belongs to the cytidylate kinase family. Type 1 subfamily.

Its subcellular location is the cytoplasm. It catalyses the reaction CMP + ATP = CDP + ADP. The enzyme catalyses dCMP + ATP = dCDP + ADP. This chain is Cytidylate kinase, found in Clostridium tetani (strain Massachusetts / E88).